The primary structure comprises 400 residues: Glutamyl-tRNA reductase (400 aa).

Residues 45-48 (TCNR), Ser103, 108-110 (EDQ), and Gln114 each bind substrate. The Nucleophile role is filled by Cys46. 179 to 184 (GYGEIG) is an NADP(+) binding site.

The protein belongs to the glutamyl-tRNA reductase family. As to quaternary structure, homodimer.

It carries out the reaction (S)-4-amino-5-oxopentanoate + tRNA(Glu) + NADP(+) = L-glutamyl-tRNA(Glu) + NADPH + H(+). The protein operates within porphyrin-containing compound metabolism; protoporphyrin-IX biosynthesis; 5-aminolevulinate from L-glutamyl-tRNA(Glu): step 1/2. Functionally, catalyzes the NADPH-dependent reduction of glutamyl-tRNA(Glu) to glutamate 1-semialdehyde (GSA). This Clostridium perfringens (strain SM101 / Type A) protein is Glutamyl-tRNA reductase.